We begin with the raw amino-acid sequence, 1427 residues long: Double-stranded DNA deaminase toxin A (1427 aa).

The next 2 helical transmembrane spans lie at 16-36 (ALAG…AVAF) and 43-63 (FGVA…LLSI). 4 YD repeats span residues 469–501 (RVVE…DGRT), 548–584 (YDDA…GPDG), 720–747 (NARG…GRLR), and 977–1008 (YDGA…ISRA). Residues 1264–1427 (IGLNGGANVY…SPKSPTKGGC (164 aa)) are C-terminal effector domain, has cytidine deaminase activity. Zn(2+) contacts are provided by H1345, C1373, and C1376. The segment at 1402–1427 (KRGATGETKVFTGNSNSPKSPTKGGC) is disordered. Polar residues predominate over residues 1412-1421 (FTGNSNSPKS).

Belongs to the RHS/WapA nuclease family. In terms of assembly, the toxic domain forms a 1:1 complex with the DddI immunity protein.

The protein resides in the membrane. It catalyses the reaction a 2'-deoxycytidine in double-stranded DNA + H2O + H(+) = a 2'-deoxyuridine in double-stranded DNA + NH4(+). In terms of biological role, toxic component of a toxin-immunity protein module, which functions as a cellular contact-dependent growth inhibition (CDI) system. CDI modules allow bacteria to communicate with and inhibit the growth of closely related neighboring bacteria in a contact-dependent fashion. Bacteria that have this module inhibit or kill bacteria without it, giving them a growth advantage. Probably specifically inhibited by cognate immunity protein DddI. The C-terminal 163 residue fragment has double-stranded DNA cytidine deaminase activity; it does not deaminate ssDNA, ssRNA or dsRNA. Leads to C:G to T:A conversions in deaminated DNA. Preferentially deaminates 5'-TC-3' substrates. This is Double-stranded DNA deaminase toxin A from Burkholderia cenocepacia (strain H111).